The following is a 252-amino-acid chain: Probable endonuclease 4 (252 aa).

Positions 56, 96, 129, 162, 165, 191, 204, 206, and 233 each coordinate Zn(2+).

Belongs to the AP endonuclease 2 family. Zn(2+) serves as cofactor.

It carries out the reaction Endonucleolytic cleavage to 5'-phosphooligonucleotide end-products.. Functionally, endonuclease IV plays a role in DNA repair. It cleaves phosphodiester bonds at apurinic or apyrimidinic (AP) sites, generating a 3'-hydroxyl group and a 5'-terminal sugar phosphate. In Mycobacterium tuberculosis (strain ATCC 25177 / H37Ra), this protein is Probable endonuclease 4.